The following is a 622-amino-acid chain: 1-deoxy-D-xylulose-5-phosphate synthase (622 aa).

Residues H80 and 121–123 contribute to the thiamine diphosphate site; that span reads GHS. Mg(2+) is bound at residue D152. Thiamine diphosphate-binding positions include 153–154, N181, Y288, and E370; that span reads GA. Mg(2+) is bound at residue N181.

It belongs to the transketolase family. DXPS subfamily. As to quaternary structure, homodimer. Requires Mg(2+) as cofactor. The cofactor is thiamine diphosphate.

The catalysed reaction is D-glyceraldehyde 3-phosphate + pyruvate + H(+) = 1-deoxy-D-xylulose 5-phosphate + CO2. It functions in the pathway metabolic intermediate biosynthesis; 1-deoxy-D-xylulose 5-phosphate biosynthesis; 1-deoxy-D-xylulose 5-phosphate from D-glyceraldehyde 3-phosphate and pyruvate: step 1/1. In terms of biological role, catalyzes the acyloin condensation reaction between C atoms 2 and 3 of pyruvate and glyceraldehyde 3-phosphate to yield 1-deoxy-D-xylulose-5-phosphate (DXP). The protein is 1-deoxy-D-xylulose-5-phosphate synthase of Shewanella sp. (strain MR-4).